A 315-amino-acid polypeptide reads, in one-letter code: DNA-directed RNA polymerase subunit alpha (315 aa).

Positions 1-228 (MLEIEKPKIE…EHFKLFMTLT (228 aa)) are alpha N-terminal domain (alpha-NTD). The tract at residues 245-315 (KEKVLEMTIE…LGLGLKKSDE (71 aa)) is alpha C-terminal domain (alpha-CTD).

Belongs to the RNA polymerase alpha chain family. Homodimer. The RNAP catalytic core consists of 2 alpha, 1 beta, 1 beta' and 1 omega subunit. When a sigma factor is associated with the core the holoenzyme is formed, which can initiate transcription.

It catalyses the reaction RNA(n) + a ribonucleoside 5'-triphosphate = RNA(n+1) + diphosphate. Functionally, DNA-dependent RNA polymerase catalyzes the transcription of DNA into RNA using the four ribonucleoside triphosphates as substrates. This chain is DNA-directed RNA polymerase subunit alpha, found in Clostridium novyi (strain NT).